Here is a 263-residue protein sequence, read N- to C-terminus: Lens fiber major intrinsic protein (263 aa).

Residues 1-12 (MWELRSASFWRA) lie on the Cytoplasmic side of the membrane. A helical transmembrane segment spans residues 13–30 (IFAEFFATLFYVFFGLGA). Topologically, residues 31 to 40 (SLRWAPGPLH) are extracellular. A helical membrane pass occupies residues 41 to 59 (VLQVALAFGLALATLVQAV). Residues 60 to 63 (GHIS) lie on the Cytoplasmic side of the membrane. The discontinuously helical intramembrane region spans 64 to 76 (GAHVNPAVTFAFL). Positions 68-70 (NPA) match the NPA 1 motif. The Cytoplasmic portion of the chain corresponds to 77–85 (VGSQMSLLR). A helical membrane pass occupies residues 86–106 (AICYVVAQLLGAVAGAAVLYS). At 107–126 (VTPPAVRGNLALNTLHPGVS) the chain is on the extracellular side. A helical transmembrane segment spans residues 127–147 (VGQATIVEIFLTLQFVLCIFA). Topologically, residues 148–157 (TYDERRNGRL) are cytoplasmic. The helical transmembrane segment at 158-175 (GSVALAVGFSLTLGHLFG) threads the bilayer. Residues 176 to 177 (MY) lie on the Extracellular side of the membrane. The discontinuously helical intramembrane region spans 178-193 (YTGAGMNPARSFAPAI). An NPA 2 motif is present at residues 184-186 (NPA). Residues 194 to 200 (LTRNFTN) lie on the Extracellular side of the membrane. The chain crosses the membrane as a helical span at residues 201–218 (HWVYWVGPVIGAGLGSLL). The Cytoplasmic portion of the chain corresponds to 219 to 263 (YDFLLFPRLKSVSERLSILKGTRPSESNGQPEVTGEPVELKTQAL). The interaction with CALM stretch occupies residues 227-237 (LKSVSERLSIL). 3 positions are modified to phosphoserine: S235, S243, and S245. The tract at residues 240 to 263 (TRPSESNGQPEVTGEPVELKTQAL) is disordered.

The protein belongs to the MIP/aquaporin (TC 1.A.8) family. Homotetramer; each monomer provides an independent water pore. Two homotetramers on opposing membranes can dimerize, forming a cell-cell junction. Interacts with CALM; the calcium-calmodulin/CALM complex interacts with the cytoplasmic domains of two aquaporins, leading to channel closure. Interacts with BFSP1 (via C-terminus); prevents calcium-dependent inhibition of the water channel activity. Subject to partial proteolytic cleavage in the eye lens core. Partial proteolysis promotes interactions between tetramers from adjoining membranes. Post-translationally, fatty acylated at Met-1 and Lys-238. The acyl modifications, in decreasing order of ion abundance, are: oleoyl (C18:1) &gt; palmitoyl (C16:0) &gt; stearoyl (C18:0) &gt; eicosenoyl (C20:1) &gt; dihomo-gamma-linolenoyl (C20:3) &gt; palmitoleoyl (C16:1) &gt; eicosadienoyl (C20:2). In terms of tissue distribution, detected in eye lens (at protein level).

It localises to the cell membrane. It is found in the cell junction. The enzyme catalyses H2O(in) = H2O(out). Its activity is regulated as follows. The water channel activity is inhibited by calcium through calmodulin/CALM. Aquaporins form homotetrameric transmembrane channels, with each monomer independently mediating water transport across the plasma membrane along its osmotic gradient. Specifically expressed in lens fiber cells, this aquaporin is crucial for maintaining lens water homeostasis and transparency. Beyond water permeability, it also acts as a cell-to-cell adhesion molecule, forming thin junctions between lens fiber cells that are essential for maintaining the ordered structure and transparency of the lens. The polypeptide is Lens fiber major intrinsic protein (Ovis aries (Sheep)).